The sequence spans 140 residues: Large ribosomal subunit protein uL13 (140 aa).

The protein belongs to the universal ribosomal protein uL13 family. In terms of assembly, part of the 50S ribosomal subunit.

Functionally, this protein is one of the early assembly proteins of the 50S ribosomal subunit, although it is not seen to bind rRNA by itself. It is important during the early stages of 50S assembly. This is Large ribosomal subunit protein uL13 from Nautilia profundicola (strain ATCC BAA-1463 / DSM 18972 / AmH).